We begin with the raw amino-acid sequence, 246 residues long: Orotidine 5'-phosphate decarboxylase (246 aa).

Substrate-binding positions include Asp-22, Lys-44, 71-80 (DLKFHDIPNT), Thr-131, Arg-192, Gln-201, Gly-221, and Arg-222. Lys-73 acts as the Proton donor in catalysis.

This sequence belongs to the OMP decarboxylase family. Type 1 subfamily. Homodimer.

It catalyses the reaction orotidine 5'-phosphate + H(+) = UMP + CO2. Its pathway is pyrimidine metabolism; UMP biosynthesis via de novo pathway; UMP from orotate: step 2/2. Catalyzes the decarboxylation of orotidine 5'-monophosphate (OMP) to uridine 5'-monophosphate (UMP). In Yersinia enterocolitica serotype O:8 / biotype 1B (strain NCTC 13174 / 8081), this protein is Orotidine 5'-phosphate decarboxylase.